The following is a 283-amino-acid chain: Protease HtpX homolog (283 aa).

2 helical membrane-spanning segments follow: residues 7-27 and 29-49; these read TAVL…VLGG and QGMA…YWFS. His-131 lines the Zn(2+) pocket. The active site involves Glu-132. Zn(2+) is bound at residue His-135. The next 2 helical transmembrane spans lie at 146–166 and 177–197; these read ISAT…FFGG and IAGI…QMAI. Glu-202 is a Zn(2+) binding site.

This sequence belongs to the peptidase M48B family. The cofactor is Zn(2+).

The protein localises to the cell inner membrane. In Methylibium petroleiphilum (strain ATCC BAA-1232 / LMG 22953 / PM1), this protein is Protease HtpX homolog.